Here is a 284-residue protein sequence, read N- to C-terminus: Tropomyosin-1 (284 aa).

A coiled-coil region spans residues 1–284 (MDAIKKKMLA…DSTFAELAGY (284 aa)). The segment at 103 to 131 (EERLQSATEKLEEASKAADESERGRKVLE) is disordered.

The protein belongs to the tropomyosin family. As to quaternary structure, homodimer.

Functionally, tropomyosin, in association with the troponin complex, plays a central role in the calcium dependent regulation of muscle contraction. The chain is Tropomyosin-1 from Biomphalaria glabrata (Bloodfluke planorb).